The following is a 459-amino-acid chain: Ribulose bisphosphate carboxylase large chain (459 aa).

The residue at position 4 (Lys4) is an N6,N6,N6-trimethyllysine. Residues Asn113 and Thr163 each coordinate substrate. Lys165 functions as the Proton acceptor in the catalytic mechanism. Position 167 (Lys167) interacts with substrate. 3 residues coordinate Mg(2+): Lys191, Asp193, and Glu194. Lys191 bears the N6-carboxylysine mark. His284 functions as the Proton acceptor in the catalytic mechanism. Substrate contacts are provided by Arg285, His317, and Ser369.

Belongs to the RuBisCO large chain family. Type I subfamily. In terms of assembly, heterohexadecamer of 8 large chains and 8 small chains; disulfide-linked. The disulfide link is formed within the large subunit homodimers. It depends on Mg(2+) as a cofactor. The disulfide bond which can form in the large chain dimeric partners within the hexadecamer appears to be associated with oxidative stress and protein turnover.

It localises to the plastid. The protein resides in the chloroplast. It catalyses the reaction 2 (2R)-3-phosphoglycerate + 2 H(+) = D-ribulose 1,5-bisphosphate + CO2 + H2O. The catalysed reaction is D-ribulose 1,5-bisphosphate + O2 = 2-phosphoglycolate + (2R)-3-phosphoglycerate + 2 H(+). Functionally, ruBisCO catalyzes two reactions: the carboxylation of D-ribulose 1,5-bisphosphate, the primary event in carbon dioxide fixation, as well as the oxidative fragmentation of the pentose substrate in the photorespiration process. Both reactions occur simultaneously and in competition at the same active site. This Morus alba (White mulberry) protein is Ribulose bisphosphate carboxylase large chain.